Here is a 51-residue protein sequence, read N- to C-terminus: Protein SspM (51 aa).

This sequence belongs to the alpha/beta-type SASP family.

This is Protein SspM (sspM) from Mycolicibacterium phlei (Mycobacterium phlei).